The sequence spans 305 residues: Glycine--tRNA ligase alpha subunit (305 aa).

The protein belongs to the class-II aminoacyl-tRNA synthetase family. Tetramer of two alpha and two beta subunits.

It is found in the cytoplasm. The catalysed reaction is tRNA(Gly) + glycine + ATP = glycyl-tRNA(Gly) + AMP + diphosphate. This chain is Glycine--tRNA ligase alpha subunit, found in Streptococcus pneumoniae (strain ATCC BAA-255 / R6).